Reading from the N-terminus, the 267-residue chain is MAAMRLTLFRIVCLLPGCLALPLSQEAGEVTALQWEQAQNYLRKFYLHDSKTKKATSAVDKLREMQKFFGLPETGKLSPRVMEIMQKPRCGVPDVAEFSLMPNSPKWHSRTVTYRIVSYTTDLPRFLVDQIVKRALRMWSMQIPLNFKRVSWGTADIIIGFARGDHGDNFPFDGPGNTLGHAFAPGPGLGGDAHFDKDEYWTDGEDSGVNFLFVATHELGHSLGLGHSSVPSSVMYPTYQGDHSEDFSLTKDDIAGIQKLYGKRNKL.

Residues 1 to 20 (MAAMRLTLFRIVCLLPGCLA) form the signal peptide. Positions 21-97 (LPLSQEAGEV…PRCGVPDVAE (77 aa)) are cleaved as a propeptide — activation peptide. Positions 88 to 95 (PRCGVPDV) match the Cysteine switch motif. Cys90 is a Zn(2+) binding site. Asp156 serves as a coordination point for Ca(2+). His166 and Asp168 together coordinate Zn(2+). Residues Asp173, Gly174, Gly176, and Thr178 each coordinate Ca(2+). His181 is a binding site for Zn(2+). Ca(2+) contacts are provided by Gly188, Gly190, and Asp192. Residue His194 participates in Zn(2+) binding. Residues Asp196 and Glu199 each coordinate Ca(2+). His217 is a Zn(2+) binding site. Glu218 is a catalytic residue. Zn(2+)-binding residues include His221 and His227.

This sequence belongs to the peptidase M10A family. It depends on Ca(2+) as a cofactor. The cofactor is Zn(2+).

The protein localises to the secreted. The protein resides in the extracellular space. Its subcellular location is the extracellular matrix. It catalyses the reaction Cleavage of 14-Ala-|-Leu-15 and 16-Tyr-|-Leu-17 in B chain of insulin. No action on collagen types I, II, IV, V. Cleaves gelatin chain alpha2(I) &gt; alpha1(I).. In terms of biological role, degrades casein, gelatins of types I, III, IV, and V, and fibronectin. Activates procollagenase. The sequence is that of Matrilysin (Mmp7) from Rattus norvegicus (Rat).